The sequence spans 373 residues: Anhydro-N-acetylmuramic acid kinase (373 aa).

13-20 provides a ligand contact to ATP; sequence GTSMDGID.

Belongs to the anhydro-N-acetylmuramic acid kinase family.

It catalyses the reaction 1,6-anhydro-N-acetyl-beta-muramate + ATP + H2O = N-acetyl-D-muramate 6-phosphate + ADP + H(+). The protein operates within amino-sugar metabolism; 1,6-anhydro-N-acetylmuramate degradation. It participates in cell wall biogenesis; peptidoglycan recycling. In terms of biological role, catalyzes the specific phosphorylation of 1,6-anhydro-N-acetylmuramic acid (anhMurNAc) with the simultaneous cleavage of the 1,6-anhydro ring, generating MurNAc-6-P. Is required for the utilization of anhMurNAc either imported from the medium or derived from its own cell wall murein, and thus plays a role in cell wall recycling. This Brucella abortus (strain 2308) protein is Anhydro-N-acetylmuramic acid kinase.